A 380-amino-acid polypeptide reads, in one-letter code: Cytochrome b (380 aa).

Transmembrane regions (helical) follow at residues 34 to 54, 78 to 99, 114 to 134, and 179 to 199; these read FGSL…LLAM, WLIR…YLHI, WNTG…GYVL, and FFAL…IHLT. Positions 84 and 98 each coordinate heme b. Residues H183 and H197 each contribute to the heme b site. H202 lines the a ubiquinone pocket. 4 helical membrane passes run 227 to 247, 289 to 309, 321 to 341, and 348 to 368; these read LKDI…ALFS, LGGV…PFLH, LSQL…WVGS, and FIII…ILFP.

The protein belongs to the cytochrome b family. As to quaternary structure, the cytochrome bc1 complex contains 11 subunits: 3 respiratory subunits (MT-CYB, CYC1 and UQCRFS1), 2 core proteins (UQCRC1 and UQCRC2) and 6 low-molecular weight proteins (UQCRH/QCR6, UQCRB/QCR7, UQCRQ/QCR8, UQCR10/QCR9, UQCR11/QCR10 and a cleavage product of UQCRFS1). This cytochrome bc1 complex then forms a dimer. Heme b serves as cofactor.

It is found in the mitochondrion inner membrane. In terms of biological role, component of the ubiquinol-cytochrome c reductase complex (complex III or cytochrome b-c1 complex) that is part of the mitochondrial respiratory chain. The b-c1 complex mediates electron transfer from ubiquinol to cytochrome c. Contributes to the generation of a proton gradient across the mitochondrial membrane that is then used for ATP synthesis. This is Cytochrome b (MT-CYB) from Thalassoica antarctica (Antarctic petrel).